Consider the following 785-residue polypeptide: MIGSINESPIEEHMNDSPSTKEKADSVDISDYIVSHSDDSLSKDIKKDTKSFLDVEHGEISTVDEFEEDSPYPEVRAAVPPTDDPSMPCNTIRMWTIGLIYSTVGAAVNMFFSLRNPTVTLSVLISELLAYPALQIWDLIFPDREFRIGRLKFNFKPGPFNVKEHALIVVMSSVSFGNAYSTDIILAQRVHYKQRFGFGYEICLTLATQLIGYGLAGLSRRLLVRPASMLWPVNLVQCTLIKTLHRKDLRNAVANGWRISPFRFFLYVFIASFIWNWFPSYIFQALSLFAWVTWIRPNSPTVNQIFGESTGISILPMTFDWNQISAYILSPLMAPADALMNILLGVILFFWIVTPALNFTNTWYGDYLPISSSGIIDHFGNSYNVTRILTKDATFDLDAYQNYSPIFMSTTYALAFGLSFASITSVIFHVILYHGKEIYDRLRDPPAPDIHEKLMKAYDEVPFYWYLSVFLAFFGMMMGTIYGWKTETPWWVIIVGVIFSAVWFIPIGIVQAITNIQLGLNVFTEFIVGYMYPGRPLAMMIFKTVGYITMTQGLAFAADLKFGHYMKLPPRIMFYTQMIATIWSCFVQIGVLDWALGNIDNVCQADQPDNYTCPNATVFFNSSVIWGVIGPKRMFSGKNTYTGLQYFWLAGVLGTILFWALWKKWPQKWWGQLNGPLIFGGTGYIPPATPVNYLAWSGIGLFFNYYLKKIFADWWQKYNFTLSAALDTGTQLSVIILFFCLQLPMVNFPDWWGNDGAFNTLDATGAAVRKLVNESAGEFFGPAEW.

Positions 1 to 28 (MIGSINESPIEEHMNDSPSTKEKADSVD) are disordered. Basic and acidic residues predominate over residues 10 to 26 (IEEHMNDSPSTKEKADS). 16 helical membrane-spanning segments follow: residues 94-114 (MWTI…FFSL), 121-141 (LSVL…DLIF), 167-187 (LIVV…IILA), 196-216 (FGFG…YGLA), 264-284 (FFLY…YIFQ), 339-359 (LMNI…ALNF), 413-433 (ALAF…VILY), 461-481 (VPFY…MGTI), 490-510 (WWVI…IGIV), 512-532 (AITN…GYMY), 537-557 (LAMM…LAFA), 572-592 (IMFY…IGVL), 611-631 (YTCP…VIGP), 642-662 (TGLQ…WALW), 683-703 (GYIP…GLFF), and 732-752 (LSVI…PDWW).

Belongs to the oligopeptide OPT transporter family.

It is found in the endoplasmic reticulum membrane. The protein is Sexual differentiation process protein isp4 (isp4) of Schizosaccharomyces pombe (strain 972 / ATCC 24843) (Fission yeast).